Consider the following 674-residue polypeptide: DNA ligase (674 aa).

NAD(+) contacts are provided by residues 34–38 (DFEFD), 83–84 (SL), and Glu-117. Lys-119 acts as the N6-AMP-lysine intermediate in catalysis. NAD(+) contacts are provided by Arg-140, Glu-184, Lys-297, and Lys-321. Zn(2+) contacts are provided by Cys-415, Cys-418, Cys-433, and Cys-439. The region spanning 598–674 (LVNNNFEGQS…IDEDEFERML (77 aa)) is the BRCT domain.

The protein belongs to the NAD-dependent DNA ligase family. LigA subfamily. The cofactor is Mg(2+). Mn(2+) is required as a cofactor.

It catalyses the reaction NAD(+) + (deoxyribonucleotide)n-3'-hydroxyl + 5'-phospho-(deoxyribonucleotide)m = (deoxyribonucleotide)n+m + AMP + beta-nicotinamide D-nucleotide.. Its function is as follows. DNA ligase that catalyzes the formation of phosphodiester linkages between 5'-phosphoryl and 3'-hydroxyl groups in double-stranded DNA using NAD as a coenzyme and as the energy source for the reaction. It is essential for DNA replication and repair of damaged DNA. The chain is DNA ligase from Chlorobaculum tepidum (strain ATCC 49652 / DSM 12025 / NBRC 103806 / TLS) (Chlorobium tepidum).